The following is a 344-amino-acid chain: tRNA N6-adenosine threonylcarbamoyltransferase (344 aa).

Positions 113 and 117 each coordinate Fe cation. Residues 135-139 (LVSGG), Asp169, Gly182, Asp186, and Asn278 contribute to the substrate site. Asp306 contributes to the Fe cation binding site.

Belongs to the KAE1 / TsaD family. Fe(2+) is required as a cofactor.

It localises to the cytoplasm. The catalysed reaction is L-threonylcarbamoyladenylate + adenosine(37) in tRNA = N(6)-L-threonylcarbamoyladenosine(37) in tRNA + AMP + H(+). In terms of biological role, required for the formation of a threonylcarbamoyl group on adenosine at position 37 (t(6)A37) in tRNAs that read codons beginning with adenine. Is involved in the transfer of the threonylcarbamoyl moiety of threonylcarbamoyl-AMP (TC-AMP) to the N6 group of A37, together with TsaE and TsaB. TsaD likely plays a direct catalytic role in this reaction. This is tRNA N6-adenosine threonylcarbamoyltransferase from Corynebacterium efficiens (strain DSM 44549 / YS-314 / AJ 12310 / JCM 11189 / NBRC 100395).